Here is a 1088-residue protein sequence, read N- to C-terminus: RNA-directed RNA polymerase (1088 aa).

The 187-residue stretch at 501 to 687 (LSYGDVTRFL…AKRYIAGGKI (187 aa)) folds into the RdRp catalytic domain.

The protein belongs to the reoviridae RNA-directed RNA polymerase family. In terms of assembly, interacts with VP3 (Potential). Interacts with VP2; this interaction activates VP1. Interacts with NSP5; this interaction is probably necessary for the formation of functional virus factories. Interacts with NSP2; this interaction is weak. The cofactor is Mg(2+).

It is found in the virion. The catalysed reaction is RNA(n) + a ribonucleoside 5'-triphosphate = RNA(n+1) + diphosphate. RNA-directed RNA polymerase that is involved in both transcription and genome replication. Together with VP3 capping enzyme, forms an enzyme complex positioned near the channels situated at each of the five-fold vertices of the core. Following infection, the outermost layer of the virus is lost, leaving a double-layered particle (DLP) made up of the core and VP6 shell. VP1 then catalyzes the transcription of fully conservative plus-strand genomic RNAs that are extruded through the DLP's channels into the cytoplasm where they function as mRNAs for translation of viral proteins. One copy of each of the viral (+)RNAs is also recruited during core assembly, together with newly synthesized polymerase complexes and VP2. The polymerase of these novo-formed particles catalyzes the synthesis of complementary minus-strands leading to dsRNA formation. To do so, the polymerase specifically recognizes and binds 4 bases 5'-UGUG-3' in the conserved 3'-sequence of plus-strand RNA templates. VP2 presumably activates the autoinhibited VP1-RNA complex to coordinate packaging and genome replication. Once dsRNA synthesis is complete, the polymerase switches to the transcriptional mode, thus providing secondary transcription. The protein is RNA-directed RNA polymerase of Homo sapiens (Human).